The sequence spans 245 residues: Ribonuclease PH (245 aa).

Residues Arg-86 and 124–126 (GTR) contribute to the phosphate site.

Belongs to the RNase PH family. Homohexameric ring arranged as a trimer of dimers.

The catalysed reaction is tRNA(n+1) + phosphate = tRNA(n) + a ribonucleoside 5'-diphosphate. In terms of biological role, phosphorolytic 3'-5' exoribonuclease that plays an important role in tRNA 3'-end maturation. Removes nucleotide residues following the 3'-CCA terminus of tRNAs; can also add nucleotides to the ends of RNA molecules by using nucleoside diphosphates as substrates, but this may not be physiologically important. Probably plays a role in initiation of 16S rRNA degradation (leading to ribosome degradation) during starvation. The protein is Ribonuclease PH of Bacillus cereus (strain G9842).